We begin with the raw amino-acid sequence, 189 residues long: GTP cyclohydrolase 1 (189 aa).

Residues cysteine 79, histidine 82, and cysteine 150 each contribute to the Zn(2+) site.

The protein belongs to the GTP cyclohydrolase I family. As to quaternary structure, homomer.

It catalyses the reaction GTP + H2O = 7,8-dihydroneopterin 3'-triphosphate + formate + H(+). Its pathway is cofactor biosynthesis; 7,8-dihydroneopterin triphosphate biosynthesis; 7,8-dihydroneopterin triphosphate from GTP: step 1/1. In Rickettsia peacockii (strain Rustic), this protein is GTP cyclohydrolase 1.